The following is a 286-amino-acid chain: Pyridoxal kinase PdxY (286 aa).

Substrate is bound by residues serine 9 and 44 to 45 (TQ). The ATP site is built by aspartate 111, glutamate 148, and lysine 181. A substrate-binding site is contributed by aspartate 222.

It belongs to the pyridoxine kinase family. PdxY subfamily. Homodimer. Requires Mg(2+) as cofactor.

The catalysed reaction is pyridoxal + ATP = pyridoxal 5'-phosphate + ADP + H(+). The protein operates within cofactor metabolism; pyridoxal 5'-phosphate salvage; pyridoxal 5'-phosphate from pyridoxal: step 1/1. Its function is as follows. Pyridoxal kinase involved in the salvage pathway of pyridoxal 5'-phosphate (PLP). Catalyzes the phosphorylation of pyridoxal to PLP. This is Pyridoxal kinase PdxY from Pasteurella multocida (strain Pm70).